The chain runs to 251 residues: tRNA (guanine-N(1)-)-methyltransferase (251 aa).

S-adenosyl-L-methionine-binding positions include G117 and 137-142; that span reads IGDYVL.

It belongs to the RNA methyltransferase TrmD family. Homodimer.

Its subcellular location is the cytoplasm. The enzyme catalyses guanosine(37) in tRNA + S-adenosyl-L-methionine = N(1)-methylguanosine(37) in tRNA + S-adenosyl-L-homocysteine + H(+). Functionally, specifically methylates guanosine-37 in various tRNAs. In Haemophilus ducreyi (strain 35000HP / ATCC 700724), this protein is tRNA (guanine-N(1)-)-methyltransferase.